The following is a 609-amino-acid chain: Sodium- and chloride-dependent GABA transporter 2 (609 aa).

Positions 1–13 (MDSRASGTASNGE) are enriched in polar residues. A disordered region spans residues 1-23 (MDSRASGTASNGETKPVYPVMEK). At 1 to 40 (MDSRASGTASNGETKPVYPVMEKEEEEGTLERGHWNNKME) the chain is on the cytoplasmic side. Transmembrane regions (helical) follow at residues 41 to 61 (FVLS…FPYL), 68 to 88 (GAFF…VFLL), and 121 to 141 (IVIL…FYLF). Residues 142–206 (SSFTIDLPWG…GIQHLGALRW (65 aa)) are Extracellular-facing. C153 and C162 are oxidised to a cystine. N-linked (GlcNAc...) asparagine glycans are attached at residues N169 and N173. 2 helical membrane-spanning segments follow: residues 207-227 (ELAL…WKGV) and 233-253 (VVYF…IRGV). Residue N269 is glycosylated (N-linked (GlcNAc...) asparagine). Helical transmembrane passes span 282 to 302 (AGTQ…ALGS), 319 to 339 (FLNS…LGFM), 366 to 386 (VVML…VVLL), 418 to 438 (VLIL…LTEG), 453 to 473 (GMCL…VYGA), 490 to 510 (PLIK…TFLF), and 528 to 548 (WWGD…IPAW). Over 549-609 (SLYRLGTLKG…LRLTELESHC (61 aa)) the chain is Cytoplasmic. At T594 the chain carries Phosphothreonine. S598 carries the post-translational modification Phosphoserine.

It belongs to the sodium:neurotransmitter symporter (SNF) (TC 2.A.22) family. SLC6A13 subfamily.

It is found in the cell membrane. The protein resides in the basolateral cell membrane. The catalysed reaction is 4-aminobutanoate(out) + chloride(out) + 2 Na(+)(out) = 4-aminobutanoate(in) + chloride(in) + 2 Na(+)(in). It carries out the reaction taurine(out) + chloride(out) + 2 Na(+)(out) = taurine(in) + chloride(in) + 2 Na(+)(in). It catalyses the reaction beta-alanine(out) + chloride(out) + 2 Na(+)(out) = beta-alanine(in) + chloride(in) + 2 Na(+)(in). The enzyme catalyses hypotaurine(out) + chloride(out) + 2 Na(+)(out) = hypotaurine(in) + chloride(in) + 2 Na(+)(in). Its function is as follows. Mediates sodium- and chloride-dependent transport of gamma-aminobutyric acid (GABA). Can also mediate transport of beta-alanine, taurine and hypotaurine. The chain is Sodium- and chloride-dependent GABA transporter 2 (SLC6A13) from Macaca fascicularis (Crab-eating macaque).